The primary structure comprises 338 residues: 4-hydroxythreonine-4-phosphate dehydrogenase (338 aa).

H140 and T141 together coordinate substrate. A divalent metal cation contacts are provided by H172, H217, and H271. Positions 279, 288, and 297 each coordinate substrate.

The protein belongs to the PdxA family. In terms of assembly, homodimer. It depends on a divalent metal cation as a cofactor.

It localises to the cytoplasm. The catalysed reaction is 4-(phosphooxy)-L-threonine + NAD(+) = 3-amino-2-oxopropyl phosphate + CO2 + NADH. The protein operates within cofactor biosynthesis; pyridoxine 5'-phosphate biosynthesis; pyridoxine 5'-phosphate from D-erythrose 4-phosphate: step 4/5. Catalyzes the NAD(P)-dependent oxidation of 4-(phosphooxy)-L-threonine (HTP) into 2-amino-3-oxo-4-(phosphooxy)butyric acid which spontaneously decarboxylates to form 3-amino-2-oxopropyl phosphate (AHAP). The sequence is that of 4-hydroxythreonine-4-phosphate dehydrogenase from Prosthecochloris aestuarii (strain DSM 271 / SK 413).